A 274-amino-acid polypeptide reads, in one-letter code: Large ribosomal subunit protein uL2 (274 aa).

Positions 221-256 are disordered; sequence RGTAMNPVDHPHGGGEGRNFGKHPVTPWGVPTKGYK.

The protein belongs to the universal ribosomal protein uL2 family. As to quaternary structure, part of the 50S ribosomal subunit. Forms a bridge to the 30S subunit in the 70S ribosome.

Functionally, one of the primary rRNA binding proteins. Required for association of the 30S and 50S subunits to form the 70S ribosome, for tRNA binding and peptide bond formation. It has been suggested to have peptidyltransferase activity; this is somewhat controversial. Makes several contacts with the 16S rRNA in the 70S ribosome. The sequence is that of Large ribosomal subunit protein uL2 from Hahella chejuensis (strain KCTC 2396).